Here is a 147-residue protein sequence, read N- to C-terminus: Small ribosomal subunit protein uS12 (147 aa).

This sequence belongs to the universal ribosomal protein uS12 family. As to quaternary structure, part of the 30S ribosomal subunit.

In terms of biological role, with S4 and S5 plays an important role in translational accuracy. Located at the interface of the 30S and 50S subunits. The chain is Small ribosomal subunit protein uS12 from Sulfurisphaera tokodaii (strain DSM 16993 / JCM 10545 / NBRC 100140 / 7) (Sulfolobus tokodaii).